The sequence spans 399 residues: Acetate kinase (399 aa).

N10 provides a ligand contact to Mg(2+). Residue K17 participates in ATP binding. R91 contributes to the substrate binding site. D148 (proton donor/acceptor) is an active-site residue. Residues 208–212 (HLGNG), 283–285 (DCR), and 331–335 (GIGEN) each bind ATP. E385 contacts Mg(2+).

Belongs to the acetokinase family. In terms of assembly, homodimer. It depends on Mg(2+) as a cofactor. Mn(2+) serves as cofactor.

The protein resides in the cytoplasm. It catalyses the reaction acetate + ATP = acetyl phosphate + ADP. It functions in the pathway metabolic intermediate biosynthesis; acetyl-CoA biosynthesis; acetyl-CoA from acetate: step 1/2. Its function is as follows. Catalyzes the formation of acetyl phosphate from acetate and ATP. Can also catalyze the reverse reaction. The chain is Acetate kinase from Shewanella baltica (strain OS223).